The primary structure comprises 435 residues: WD repeat domain phosphoinositide-interacting protein 2 (435 aa).

One copy of the WD 1 repeat lies at 182–222 (AHDSPLAALAFDASGTKLATASEKGTVIRVFSIPEGQKLFE). Residues 223–226 (FRRG) carry the L/FRRG motif motif. 2 WD repeats span residues 228–267 (KRCV…EKPP) and 311–349 (GHKN…GGEC). The segment at 386 to 435 (VTKTYPPPSPTRHAYADDLGAVGGASEEDEMGNLRLDEDNENPPMILQTE) is disordered.

The protein belongs to the WD repeat PROPPIN family.

It is found in the preautophagosomal structure membrane. Component of the autophagy machinery that controls the major intracellular degradation process by which cytoplasmic materials are packaged into autophagosomes and delivered to lysosomes for degradation. Involved in an early step of the formation of preautophagosomal structures. This chain is WD repeat domain phosphoinositide-interacting protein 2 (wipi2), found in Xenopus laevis (African clawed frog).